The following is a 401-amino-acid chain: Shugoshin (401 aa).

Residues 3–49 are a coiled coil; that stretch reads SKVEQQYKLLNAELMDQVQKQRLEIGEYRKRVISLEREIMDIREEHV. The tract at residues 82 to 197 is disordered; it reads EPAPAAQINR…VEETQTEQNE (116 aa). Basic and acidic residues predominate over residues 98 to 108; the sequence is SSREICKDMRR. The segment covering 114–137 has biased composition (low complexity); it reads RTTRPISPRRSSSVTSTVSSTSRR. Serine 124, serine 125, and serine 126 each carry phosphoserine; by AurB. The segment covering 171–183 has biased composition (acidic residues); the sequence is VFDEDDSDDDFDE. Threonine 331 carries the post-translational modification Phosphothreonine; by PLK1. The interval 338–401 is disordered; sequence EEMPSIRTRS…GSKGKAKAKK (64 aa). Over residues 348–377 the composition is skewed to polar residues; the sequence is RTAANKKSENTDMSSSFCNNSARPSRSCRP. The segment covering 387–401 has biased composition (basic residues); that stretch reads NKLRNGSKGKAKAKK.

The protein belongs to the shugoshin family. Homodimer. Interacts with Incenp. Post-translationally, phosphorylation by polo-like kinase (PLK) on Thr-331 antagonizes cohesive function. Phosphorylation on Thr-331 at the metaphase anaphase transition leads to its dissociation from centromeres. In contrast, phosphorylation by aurB/ial on either Ser-124, Ser-125 or Ser-126 is required for association with centromeres.

The protein localises to the chromosome. The protein resides in the centromere. Plays a central role in chromosome cohesion during meiosis and mitosis by preventing premature dissociation of cohesin complex from centromeres after prophase, when most of cohesin complex dissociates from chromosomes arms. May act by protecting or Rad21 from cleavage by Sse/separase. Required during meiosis in both males and females. The polypeptide is Shugoshin (mei-S332) (Drosophila melanogaster (Fruit fly)).